A 282-amino-acid polypeptide reads, in one-letter code: Bifunctional protein FolD 1 (282 aa).

NADP(+) is bound by residues 167 to 169 and Ser192; that span reads GRS.

It belongs to the tetrahydrofolate dehydrogenase/cyclohydrolase family. In terms of assembly, homodimer.

It catalyses the reaction (6R)-5,10-methylene-5,6,7,8-tetrahydrofolate + NADP(+) = (6R)-5,10-methenyltetrahydrofolate + NADPH. The enzyme catalyses (6R)-5,10-methenyltetrahydrofolate + H2O = (6R)-10-formyltetrahydrofolate + H(+). It participates in one-carbon metabolism; tetrahydrofolate interconversion. Functionally, catalyzes the oxidation of 5,10-methylenetetrahydrofolate to 5,10-methenyltetrahydrofolate and then the hydrolysis of 5,10-methenyltetrahydrofolate to 10-formyltetrahydrofolate. The polypeptide is Bifunctional protein FolD 1 (Colwellia psychrerythraea (strain 34H / ATCC BAA-681) (Vibrio psychroerythus)).